The sequence spans 20 residues: TAANVKIFNTEEVQNFINLL.

This sequence belongs to the intradiol ring-cleavage dioxygenase family. Homodimer which dissociates into active monomeric subunits at high ionic strengths. Requires Fe(3+) as cofactor.

The catalysed reaction is catechol + O2 = cis,cis-muconate + 2 H(+). The protein operates within aromatic compound metabolism; beta-ketoadipate pathway; 5-oxo-4,5-dihydro-2-furylacetate from catechol: step 1/3. This is Catechol 1,2-dioxygenase from Acinetobacter radioresistens.